The following is a 341-amino-acid chain: DNA-directed RNA polymerase subunit alpha (341 aa).

The segment at Met-1–Asn-226 is alpha N-terminal domain (alpha-NTD). Residues Ala-241–Leu-341 form an alpha C-terminal domain (alpha-CTD) region.

Belongs to the RNA polymerase alpha chain family. In terms of assembly, homodimer. The RNAP catalytic core consists of 2 alpha, 1 beta, 1 beta' and 1 omega subunit. When a sigma factor is associated with the core the holoenzyme is formed, which can initiate transcription.

The catalysed reaction is RNA(n) + a ribonucleoside 5'-triphosphate = RNA(n+1) + diphosphate. DNA-dependent RNA polymerase catalyzes the transcription of DNA into RNA using the four ribonucleoside triphosphates as substrates. In Acidothermus cellulolyticus (strain ATCC 43068 / DSM 8971 / 11B), this protein is DNA-directed RNA polymerase subunit alpha.